The primary structure comprises 296 residues: Glycine--tRNA ligase alpha subunit (296 aa).

Belongs to the class-II aminoacyl-tRNA synthetase family. Tetramer of two alpha and two beta subunits.

Its subcellular location is the cytoplasm. It carries out the reaction tRNA(Gly) + glycine + ATP = glycyl-tRNA(Gly) + AMP + diphosphate. This Synechococcus sp. (strain WH7803) protein is Glycine--tRNA ligase alpha subunit.